Reading from the N-terminus, the 349-residue chain is Terpene cyclase rstn5 (349 aa).

5 helical membrane passes run 4–24 (LTPLIFLSLAMAAAVGVWGVF), 81–101 (FMVQFLANVAVIPVILNTEGA), 116–136 (GLFSQMATSAVMCPLYGFWFV), 158–178 (VVPSSVLIGYGIPALLSFDPF), and 181–201 (GLDLQIRGILAFTLYPLCISL). Asparagine 222 carries an N-linked (GlcNAc...) asparagine glycan. A run of 3 helical transmembrane segments spans residues 228-248 (VAVGVVGMVSHLWYLGTGLTG), 271-291 (LVLLFLQIDYVITFAAMLLLA), and 309-329 (TLAVGWLFLGPGATLAAAWAL).

This sequence belongs to the membrane-bound ascI terpene cyclase family.

It is found in the membrane. It functions in the pathway antifungal biosynthesis. Its function is as follows. Cyclase; part of the gene cluster that mediates the biosynthesis of the tetrahydropyranyl antifungal agent restricticin that acts as an inhibitor of CYP51 and blocks the ergosterol biosynthesis. The highly reducing polyketide synthase rstn3, the short chain dehydrogenase rstn4, the cyclase rstn5, the FAD-dependent monooxygenase rstn6 and the enoylreductase rstn7 are required to generate the first stable intermediate desmethylrestrictinol. Rstn3 with rstn7 biosynthesize the first polyketide chain intermediate that is reduced by rstn4, followed by epoxidation by rstn6 before 6-endo cyclization via epoxide opening by rstn5 leads to desmethylrestrictinol. The methyltransferase rstn1 then catalyzes the C4 O-methylation of desmethylrestrictinol to produce restrictinol, and the nonribosomal peptide synthetase rstn8 catalyzes the C3 esterification of restrictinol with glycine that leads to restricticin. The polypeptide is Terpene cyclase rstn5 (Aspergillus nomiae NRRL (strain ATCC 15546 / NRRL 13137 / CBS 260.88 / M93)).